A 201-amino-acid polypeptide reads, in one-letter code: MSRYRGPRLKKIRRLGALPGLTRKTPKSGSNLKKKFNSGKKEQYRIRLQEKQKLRFHYGLTERQLLRYVHIAGKAKRSTGQVLLQLLEMRLDNILFRLGMASTIPGARQLVNHRHILVNGRIVNIPSFRCKPRDIITTKDNQRSKGLVQNYIASSDPGKLPKHLAIDTLEYKGLVNKILDRKWVGLKINELLVVEYYSRQT.

The 69-residue stretch at 89 to 157 folds into the S4 RNA-binding domain; the sequence is MRLDNILFRL…VQNYIASSDP (69 aa).

It belongs to the universal ribosomal protein uS4 family. As to quaternary structure, part of the 30S ribosomal subunit. Contacts protein S5. The interaction surface between S4 and S5 is involved in control of translational fidelity.

The protein localises to the plastid. It is found in the chloroplast. Its function is as follows. One of the primary rRNA binding proteins, it binds directly to 16S rRNA where it nucleates assembly of the body of the 30S subunit. Functionally, with S5 and S12 plays an important role in translational accuracy. In Triticum aestivum (Wheat), this protein is Small ribosomal subunit protein uS4c (rps4).